A 313-amino-acid polypeptide reads, in one-letter code: Ras-related GTP-binding protein A (313 aa).

Residues Ser-16, Gly-17, Gly-19, Lys-20, Thr-21, Ser-22, Thr-36, Thr-42, Gly-65, and His-127 each contribute to the GTP site. Gly-17, Gly-19, Lys-20, Thr-21, and Ser-22 together coordinate GDP. GDP-binding residues include His-127 and Asp-130. Lys-142 participates in a covalent cross-link: Glycyl lysine isopeptide (Lys-Gly) (interchain with G-Cter in ubiquitin). GDP contacts are provided by Leu-148 and Ile-164. Ile-164 provides a ligand contact to GTP. Glycyl lysine isopeptide (Lys-Gly) (interchain with G-Cter in ubiquitin) cross-links involve residues Lys-220, Lys-230, and Lys-244. Ser-309 is subject to Phosphoserine.

Belongs to the GTR/RAG GTP-binding protein family. In terms of assembly, can occur as a homodimer or as a heterodimer with RRAGC or RRAGD in a sequence-independent manner; heterodimerization stabilizes proteins of the heterodimer. The GTP-bound form of RRAGA (in complex with the GDP-bound form of RRAGC or RRAGD) interacts with RPTOR, thereby promoting recruitment of mTORC1 to the lysosomes. The Rag heterodimer interacts with SLC38A9; the probable amino acid sensor. The Rag heterodimer interacts with the Ragulator complex. The GTP-bound form of RRAGA interacts with NOL8. Component of the lysosomal folliculin complex (LFC), composed of FLCN, FNIP1 (or FNIP2), RagA/RRAGA or RagB/RRAGB GDP-bound, RagC/RRAGC or RagD/RRAGD GTP-bound, and Ragulator. Interacts with SH3BP4; the interaction with this negative regulator is most probably direct, preferentially occurs with the inactive GDP-bound form of RRAGA and is negatively regulated by amino acids. Interacts (polyubiquitinated) with TSC2. Interacts with SESN1, SESN2 and SESN3. Interacts with PIP4P1. Interacts with GPR137B. Interacts with WDR83; this interaction regulates the spatiotemporal localization of mTORC1 to the lysosomal surface. Polybiquitinated via 'Lys-63'-linked polyubiquitination by RNF152 in response to amino acid starvation: polyubiquitination of the GDP-bound inactive form by RNF152 promotes RRAGA inactivation and interaction with the GATOR1 complex. This does not affect RRAGA degradation.

It is found in the cytoplasm. The protein resides in the nucleus. It localises to the lysosome membrane. It carries out the reaction GTP + H2O = GDP + phosphate + H(+). The activation of GTP-binding proteins is generally mediated by a guanine exchange factor (GEF), while inactivation through hydrolysis of bound GTP is catalyzed by a GTPase activating protein (GAP). The Ragulator complex functions as a GEF and promotes the active GTP-bound form. The GATOR1 complex functions as a GAP and stimulates RRAGA GTPase activity to turn it into its inactive GDP-bound form, preventing mTORC1 recruitment and activation. In terms of biological role, guanine nucleotide-binding protein that plays a crucial role in the cellular response to amino acid availability through regulation of the mTORC1 signaling cascade. Forms heterodimeric Rag complexes with RagC/RRAGC or RagD/RRAGD and cycles between an inactive GDP-bound and an active GTP-bound form: RagA/RRAGA is in its active form when GTP-bound RagA/RRAGA forms a complex with GDP-bound RagC/RRAGC (or RagD/RRAGD) and in an inactive form when GDP-bound RagA/RRAGA heterodimerizes with GTP-bound RagC/RRAGC (or RagD/RRAGD). In its GTP-bound active form, promotes the recruitment of mTORC1 to the lysosomes and its subsequent activation by the GTPase RHEB. Involved in the RCC1/Ran-GTPase pathway. May play a direct role in a TNF-alpha signaling pathway leading to induction of cell death. In Bos taurus (Bovine), this protein is Ras-related GTP-binding protein A.